A 250-amino-acid polypeptide reads, in one-letter code: 3-deoxy-manno-octulosonate cytidylyltransferase (250 aa).

This sequence belongs to the KdsB family.

The protein localises to the cytoplasm. It catalyses the reaction 3-deoxy-alpha-D-manno-oct-2-ulosonate + CTP = CMP-3-deoxy-beta-D-manno-octulosonate + diphosphate. Its pathway is nucleotide-sugar biosynthesis; CMP-3-deoxy-D-manno-octulosonate biosynthesis; CMP-3-deoxy-D-manno-octulosonate from 3-deoxy-D-manno-octulosonate and CTP: step 1/1. The protein operates within bacterial outer membrane biogenesis; lipopolysaccharide biosynthesis. Its function is as follows. Activates KDO (a required 8-carbon sugar) for incorporation into bacterial lipopolysaccharide in Gram-negative bacteria. The sequence is that of 3-deoxy-manno-octulosonate cytidylyltransferase from Francisella tularensis subsp. novicida (strain U112).